Reading from the N-terminus, the 556-residue chain is Dihydroxy-acid dehydratase (556 aa).

Residue Asp78 participates in Mg(2+) binding. [2Fe-2S] cluster is bound at residue Cys119. Mg(2+) contacts are provided by Asp120 and Lys121. Lys121 is modified (N6-carboxylysine). Position 191 (Cys191) interacts with [2Fe-2S] cluster. Glu442 contacts Mg(2+). Ser468 acts as the Proton acceptor in catalysis.

The protein belongs to the IlvD/Edd family. Homodimer. The cofactor is [2Fe-2S] cluster. Mg(2+) serves as cofactor.

The enzyme catalyses (2R)-2,3-dihydroxy-3-methylbutanoate = 3-methyl-2-oxobutanoate + H2O. It carries out the reaction (2R,3R)-2,3-dihydroxy-3-methylpentanoate = (S)-3-methyl-2-oxopentanoate + H2O. Its pathway is amino-acid biosynthesis; L-isoleucine biosynthesis; L-isoleucine from 2-oxobutanoate: step 3/4. It functions in the pathway amino-acid biosynthesis; L-valine biosynthesis; L-valine from pyruvate: step 3/4. Its function is as follows. Functions in the biosynthesis of branched-chain amino acids. Catalyzes the dehydration of (2R,3R)-2,3-dihydroxy-3-methylpentanoate (2,3-dihydroxy-3-methylvalerate) into 2-oxo-3-methylpentanoate (2-oxo-3-methylvalerate) and of (2R)-2,3-dihydroxy-3-methylbutanoate (2,3-dihydroxyisovalerate) into 2-oxo-3-methylbutanoate (2-oxoisovalerate), the penultimate precursor to L-isoleucine and L-valine, respectively. This chain is Dihydroxy-acid dehydratase, found in Clostridium kluyveri (strain NBRC 12016).